A 428-amino-acid chain; its full sequence is Hercynine oxygenase (428 aa).

Residue H46 coordinates Fe cation. Residue 82–85 participates in gamma-L-glutamyl-L-cysteine binding; the sequence is RASR. Residues H129 and H133 each coordinate Fe cation. 2 residues coordinate gamma-L-glutamyl-L-cysteine: D411 and R415.

Belongs to the EgtB family. As to quaternary structure, monomer. The cofactor is Fe(2+).

It carries out the reaction gamma-L-glutamyl-L-cysteine + hercynine + O2 = gamma-L-glutamyl-hercynylcysteine S-oxide + H2O. It participates in amino-acid biosynthesis; ergothioneine biosynthesis. Catalyzes the oxidative sulfurization of hercynine (N-alpha,N-alpha,N-alpha-trimethyl-L-histidine) into hercynyl-gamma-L-glutamyl-L-cysteine sulfoxide, a step in the biosynthesis pathway of ergothioneine. Cannot use the alternative thiols cysteine, N-acetylcysteine, or glutathione instead of gamma-glutamylcysteine as substrates, and histidine is a poor sulfur acceptor substrate compared to hercynine. This chain is Hercynine oxygenase, found in Mycolicibacterium smegmatis (strain ATCC 700084 / mc(2)155) (Mycobacterium smegmatis).